A 217-amino-acid polypeptide reads, in one-letter code: Dual specificity phosphatase 29 (217 aa).

The Tyrosine-protein phosphatase domain maps to histidine 46–leucine 194. A substrate-binding site is contributed by histidine 138–arginine 145. Cysteine 139 serves as the catalytic Phosphocysteine intermediate.

This sequence belongs to the protein-tyrosine phosphatase family. Non-receptor class dual specificity subfamily.

It is found in the cytoplasm. It localises to the nucleus. It carries out the reaction O-phospho-L-tyrosyl-[protein] + H2O = L-tyrosyl-[protein] + phosphate. It catalyses the reaction O-phospho-L-seryl-[protein] + H2O = L-seryl-[protein] + phosphate. The catalysed reaction is O-phospho-L-threonyl-[protein] + H2O = L-threonyl-[protein] + phosphate. In terms of biological role, dual specificity phosphatase able to dephosphorylate phosphotyrosine, phosphoserine and phosphothreonine residues within the same substrate, with a preference for phosphotyrosine as a substrate. Involved in the modulation of AMPK and MAPK1/2 signaling pathways. The chain is Dual specificity phosphatase 29 (DUSP29) from Anolis carolinensis (Green anole).